The sequence spans 307 residues: F-box protein At2g23160 (307 aa).

The region spanning 2–49 is the F-box domain; the sequence is NSSSPISIDLIAEILSRVPSKSVARFRCVSKPWASMIRRPYFTELFLT.

The protein is F-box protein At2g23160 of Arabidopsis thaliana (Mouse-ear cress).